We begin with the raw amino-acid sequence, 269 residues long: 15-hydroxyprostaglandin dehydrogenase [NAD(+)] (269 aa).

NAD(+)-binding positions include G12–A20, D36–W37, C63–V65, and N91. S138 and Q148 together coordinate substrate. Y151 serves as the catalytic Proton acceptor. Residues Y151–K155 and V186–T188 each bind NAD(+).

The protein belongs to the short-chain dehydrogenases/reductases (SDR) family. As to quaternary structure, homodimer. Expressed in proximal convoluted tubules of the kidney, where it colocalizes with the prostaglandin transporter SLC22A22 (at protein level). Expressed in lung, intestine, stomach and liver.

The protein resides in the cytoplasm. It carries out the reaction prostaglandin E2 + NAD(+) = 15-oxoprostaglandin E2 + NADH + H(+). It catalyses the reaction (15S)-hydroxy-(5Z,8Z,11Z,13E)-eicosatetraenoate + NAD(+) = 15-oxo-(5Z,8Z,11Z,13E)-eicosatetraenoate + NADH + H(+). The catalysed reaction is (11R)-hydroxy-(5Z,8Z,12E,14Z)-eicosatetraenoate + NAD(+) = 11-oxo-(5Z,8Z,12E,14Z)-eicosatetraenoate + NADH + H(+). The enzyme catalyses lipoxin A4 + NAD(+) = 15-oxo-(5S,6R)-dihydroxy-(7E,9E,11Z,13E)-eicosatetraenoate + NADH + H(+). It carries out the reaction 15-oxo-(5S,6R)-dihydroxy-(7E,9E,11Z)-eicosatrienoate + NADH + H(+) = (5S,6R,15S)-trihydroxy-(7E,9E,11Z)-eicosatrienoate + NAD(+). It catalyses the reaction prostaglandin A1 + NAD(+) = 15-oxo-prostaglandin A1 + NADH + H(+). The catalysed reaction is prostaglandin E1 + NAD(+) = 15-oxoprostaglandin E1 + NADH + H(+). The enzyme catalyses 14-hydroxy-(4Z,7Z,10Z,12E,16Z,19Z)-docosahexaenoate + NAD(+) = 14-oxo-(4Z,7Z,10Z,12E,16Z,19Z)-docosahexaenoate + NADH + H(+). It carries out the reaction resolvin E1 + NAD(+) = 18-oxo-resolvin E1 + NADH + H(+). It catalyses the reaction resolvin D1 + NAD(+) = 8-oxoresolvin D1 + NADH + H(+). The catalysed reaction is resolvin D1 + NAD(+) = 17-oxoresolvin D1 + NADH + H(+). The enzyme catalyses resolvin D2 + NAD(+) = 7-oxoresolvin D2 + NADH + H(+). It carries out the reaction resolvin D2 + NAD(+) = 16-oxoresolvin D2 + NADH + H(+). Its function is as follows. Catalyzes the NAD-dependent dehydrogenation (oxidation) of a broad array of hydroxylated polyunsaturated fatty acids (mainly eicosanoids and docosanoids, including prostaglandins, lipoxins and resolvins), yielding their corresponding keto (oxo) metabolites. Decreases the levels of the pro-proliferative prostaglandins such as prostaglandin E2 (whose activity is increased in cancer because of an increase in the expression of cyclooxygenase 2) and generates oxo-fatty acid products that can profoundly influence cell function by abrogating pro-inflammatory cytokine expression. Converts resolvins E1, D1 and D2 to their oxo products, which represents a mode of resolvin inactivation. Resolvin E1 plays important roles during the resolution phase of acute inflammation, while resolvins D1 and D2 have a unique role in obesity-induced adipose inflammation. The sequence is that of 15-hydroxyprostaglandin dehydrogenase [NAD(+)] (Hpgd) from Mus musculus (Mouse).